An 88-amino-acid chain; its full sequence is Beta-insect excitatory toxin 1 (88 aa).

The N-terminal stretch at 1 to 18 (MKFLLLFLVVLPIMGVFG) is a signal peptide. Residues 20–83 (KNGYAVDSSG…ISDTRKSYCD (64 aa)) enclose the LCN-type CS-alpha/beta domain. Cystine bridges form between cysteine 34–cysteine 55, cysteine 40–cysteine 60, cysteine 44–cysteine 62, and cysteine 56–cysteine 82.

It belongs to the long (4 C-C) scorpion toxin superfamily. Sodium channel inhibitor family. Beta subfamily. In terms of tissue distribution, expressed by the venom gland.

It localises to the secreted. Its function is as follows. Excitatory insect beta-toxins induce a spastic paralysis. They bind voltage-independently at site-4 of sodium channels (Nav) and shift the voltage of activation toward more negative potentials thereby affecting sodium channel activation and promoting spontaneous and repetitive firing. This toxin is active only on insects. This is Beta-insect excitatory toxin 1 from Androctonus australis (Sahara scorpion).